Reading from the N-terminus, the 294-residue chain is 4-diphosphocytidyl-2-C-methyl-D-erythritol kinase (294 aa).

K15 is a catalytic residue. 101–111 lines the ATP pocket; that stretch reads PSEAGLGGGSS. The active site involves D143.

The protein belongs to the GHMP kinase family. IspE subfamily.

The catalysed reaction is 4-CDP-2-C-methyl-D-erythritol + ATP = 4-CDP-2-C-methyl-D-erythritol 2-phosphate + ADP + H(+). The protein operates within isoprenoid biosynthesis; isopentenyl diphosphate biosynthesis via DXP pathway; isopentenyl diphosphate from 1-deoxy-D-xylulose 5-phosphate: step 3/6. Its function is as follows. Catalyzes the phosphorylation of the position 2 hydroxy group of 4-diphosphocytidyl-2C-methyl-D-erythritol. In Fusobacterium nucleatum subsp. nucleatum (strain ATCC 25586 / DSM 15643 / BCRC 10681 / CIP 101130 / JCM 8532 / KCTC 2640 / LMG 13131 / VPI 4355), this protein is 4-diphosphocytidyl-2-C-methyl-D-erythritol kinase.